A 396-amino-acid chain; its full sequence is NADH-quinone oxidoreductase subunit D (396 aa).

The protein belongs to the complex I 49 kDa subunit family. NDH-1 is composed of 14 different subunits. Subunits NuoB, C, D, E, F, and G constitute the peripheral sector of the complex.

It is found in the cell inner membrane. The enzyme catalyses a quinone + NADH + 5 H(+)(in) = a quinol + NAD(+) + 4 H(+)(out). Its function is as follows. NDH-1 shuttles electrons from NADH, via FMN and iron-sulfur (Fe-S) centers, to quinones in the respiratory chain. The immediate electron acceptor for the enzyme in this species is believed to be ubiquinone. Couples the redox reaction to proton translocation (for every two electrons transferred, four hydrogen ions are translocated across the cytoplasmic membrane), and thus conserves the redox energy in a proton gradient. The sequence is that of NADH-quinone oxidoreductase subunit D from Rhodopseudomonas palustris (strain BisB18).